Consider the following 409-residue polypeptide: Glutamyl-tRNA reductase (409 aa).

Residues 48-51 (TCNR), S89, 94-96 (ENE), and Q100 each bind substrate. C49 functions as the Nucleophile in the catalytic mechanism. 165–170 (GNGMLA) is an NADP(+) binding site.

This sequence belongs to the glutamyl-tRNA reductase family. Homodimer.

The catalysed reaction is (S)-4-amino-5-oxopentanoate + tRNA(Glu) + NADP(+) = L-glutamyl-tRNA(Glu) + NADPH + H(+). The protein operates within porphyrin-containing compound metabolism; protoporphyrin-IX biosynthesis; 5-aminolevulinate from L-glutamyl-tRNA(Glu): step 1/2. In terms of biological role, catalyzes the NADPH-dependent reduction of glutamyl-tRNA(Glu) to glutamate 1-semialdehyde (GSA). This is Glutamyl-tRNA reductase from Thermoplasma volcanium (strain ATCC 51530 / DSM 4299 / JCM 9571 / NBRC 15438 / GSS1).